The sequence spans 347 residues: Rhodopsin (347 aa).

The Extracellular segment spans residues 1–33; it reads TEGPDFYIPMVNTTGVVRSPYEYPQYYLVNPAA. N-linked (GlcNAc...) asparagine glycosylation is present at Asn-12. Residues 34-58 traverse the membrane as a helical segment; the sequence is FAVLGAYMFFLIIIGFPINFLTLYV. The Cytoplasmic portion of the chain corresponds to 59 to 70; the sequence is TLEHKKLRTPLN. The chain crosses the membrane as a helical span at residues 71 to 93; the sequence is YILLNLAVADLFMVIGGFTTTMY. The Extracellular portion of the chain corresponds to 94–107; that stretch reads SSMHGYFVLGRLGC. An intrachain disulfide couples Cys-107 to Cys-184. Residues 108–130 traverse the membrane as a helical segment; the sequence is NIEGFFATLGGMISLWSLAVLAI. The 'Ionic lock' involved in activated form stabilization signature appears at 131–133; the sequence is ERW. Residues 131 to 149 are Cytoplasmic-facing; the sequence is ERWVVVCKPISNFRFGENH. A helical transmembrane segment spans residues 150 to 170; that stretch reads AIMGVSLTWVMALACTVPPLV. The Extracellular segment spans residues 171–199; the sequence is GWSRYIPEGMQCACGIDYYTRAEGYNNES. An N-linked (GlcNAc...) asparagine glycan is attached at Asn-197. The chain crosses the membrane as a helical span at residues 200–221; sequence FVIYMFTFHFLFPMFIIFFCYG. Residues 222 to 249 lie on the Cytoplasmic side of the membrane; that stretch reads RLLCAVKEAAAAQQESETTQRAEREVTR. The chain crosses the membrane as a helical span at residues 250–271; it reads MVILMVIGYLVCWLPYASVAWF. Residues 272–283 are Extracellular-facing; sequence IFTHKGSEFGPL. A helical transmembrane segment spans residues 284–305; that stretch reads FMAVPSFFAKSSSIYNPIIYIC. Lys-293 bears the N6-(retinylidene)lysine mark. Over 306–347 the chain is Cytoplasmic; sequence MNKQFRQCMITTLFCGKNPFEGQEEDSSTKTEASSASSVSPA. Cys-320 is lipidated: S-palmitoyl cysteine. A disordered region spans residues 326-347; sequence EGQEEDSSTKTEASSASSVSPA. The segment covering 335–347 has biased composition (low complexity); that stretch reads KTEASSASSVSPA.

It belongs to the G-protein coupled receptor 1 family. Opsin subfamily. Phosphorylated on some or all of the serine and threonine residues present in the C-terminal region. Post-translationally, contains one covalently linked retinal chromophore.

Its subcellular location is the membrane. The protein resides in the cell projection. It is found in the cilium. The protein localises to the photoreceptor outer segment. Its function is as follows. Photoreceptor required for image-forming vision at low light intensity. While most salt water fish species use retinal as chromophore, most freshwater fish use 3-dehydroretinal, or a mixture of retinal and 3-dehydroretinal. Light-induced isomerization of 11-cis to all-trans retinal triggers a conformational change that activates signaling via G-proteins. Subsequent receptor phosphorylation mediates displacement of the bound G-protein alpha subunit by arrestin and terminates signaling. The protein is Rhodopsin (rho) of Sargocentron tiere (Blue lined squirrelfish).